A 234-amino-acid polypeptide reads, in one-letter code: Ubiquitin domain-containing protein 2 (234 aa).

A disordered region spans residues 1 to 46; sequence MGGCVGAQHDSSGSLNENSEGTGVALGRNQPLKKEKPKWKSDYPMT. The span at 9 to 21 shows a compositional bias: polar residues; the sequence is HDSSGSLNENSEG. Residues 32–41 show a composition bias toward basic and acidic residues; that stretch reads LKKEKPKWKS. The Ubiquitin-like domain maps to 152–227; sequence SQLRLRLSTG…VQVIMSQPLQ (76 aa).

It localises to the cytoplasm. The chain is Ubiquitin domain-containing protein 2 (UBTD2) from Bos taurus (Bovine).